Reading from the N-terminus, the 144-residue chain is Flagellar assembly factor FliW (144 aa).

It belongs to the FliW family. As to quaternary structure, interacts with translational regulator CsrA and flagellin(s).

The protein resides in the cytoplasm. In terms of biological role, acts as an anti-CsrA protein, binds CsrA and prevents it from repressing translation of its target genes, one of which is flagellin. Binds to flagellin and participates in the assembly of the flagellum. This Geobacillus sp. (strain WCH70) protein is Flagellar assembly factor FliW.